Reading from the N-terminus, the 100-residue chain is Urease subunit gamma (100 aa).

This sequence belongs to the urease gamma subunit family. As to quaternary structure, heterotrimer of UreA (gamma), UreB (beta) and UreC (alpha) subunits. Three heterotrimers associate to form the active enzyme.

It is found in the cytoplasm. It catalyses the reaction urea + 2 H2O + H(+) = hydrogencarbonate + 2 NH4(+). The protein operates within nitrogen metabolism; urea degradation; CO(2) and NH(3) from urea (urease route): step 1/1. The chain is Urease subunit gamma from Prochlorococcus marinus (strain AS9601).